The sequence spans 426 residues: Chaperone SurA (426 aa).

A signal peptide spans M1–A13. PpiC domains follow at residues S164–D265 and R274–G373.

The protein localises to the periplasm. The enzyme catalyses [protein]-peptidylproline (omega=180) = [protein]-peptidylproline (omega=0). Functionally, chaperone involved in the correct folding and assembly of outer membrane proteins. Recognizes specific patterns of aromatic residues and the orientation of their side chains, which are found more frequently in integral outer membrane proteins. May act in both early periplasmic and late outer membrane-associated steps of protein maturation. In Pseudomonas fluorescens (strain ATCC BAA-477 / NRRL B-23932 / Pf-5), this protein is Chaperone SurA.